A 296-amino-acid polypeptide reads, in one-letter code: Heme oxygenase 1 (296 aa).

Residues 1–273 lie on the Cytoplasmic side of the membrane; sequence METSQPHNAE…RMQADMLTTS (273 aa). The heme b site is built by K21, H28, Y137, and R186. Residues 231–264 are disordered; sequence GHAVQPKAELRTRSVNKSHENSPAAGKESERTSR. Residues 238–250 are compositionally biased toward basic and acidic residues; sequence AELRTRSVNKSHE. The helical; Anchor for type IV membrane protein transmembrane segment at 274 to 296 threads the bilayer; the sequence is PLVRWLLALGFIATTVAVGLFAM.

The protein belongs to the heme oxygenase family. As to quaternary structure, homodimer and higher order homooligomer. Oligomerization is crucial for its stability and function in the endoplasmic reticulum. Post-translationally, a soluble form arises by proteolytic removal of the membrane anchor.

It is found in the endoplasmic reticulum membrane. The enzyme catalyses heme b + 3 reduced [NADPH--hemoprotein reductase] + 3 O2 = biliverdin IXalpha + CO + Fe(2+) + 3 oxidized [NADPH--hemoprotein reductase] + 3 H2O + H(+). Its activity is regulated as follows. Inhibited by metalloporphyrins in the following order of decreasing potency: tin mesoporphyrin &gt; tin protoporphyrin &gt; zinc protoporphyrin &gt; manganese protoporphyrin &gt; cobalt protoporphyrin. Its function is as follows. Catalyzes the oxidative cleavage of heme at the alpha-methene bridge carbon, released as carbon monoxide (CO), to generate biliverdin IXalpha, while releasing the central heme iron chelate as ferrous iron. Affords protection against programmed cell death and this cytoprotective effect relies on its ability to catabolize free heme and prevent it from sensitizing cells to undergo apoptosis. Functionally, catalyzes the oxidative cleavage of heme at the alpha-methene bridge carbon, released as carbon monoxide (CO), to generate biliverdin IXalpha, while releasing the central heme iron chelate as ferrous iron. This is Heme oxygenase 1 (HMOX1) from Gallus gallus (Chicken).